Here is a 139-residue protein sequence, read N- to C-terminus: Small ribosomal subunit protein uS12 (139 aa).

A disordered region spans residues 119–139 (GVDKRRQQRSAYGAKKPKPKS).

It belongs to the universal ribosomal protein uS12 family. Part of the 30S ribosomal subunit. Contacts proteins S8 and S17. May interact with IF1 in the 30S initiation complex.

In terms of biological role, with S4 and S5 plays an important role in translational accuracy. Interacts with and stabilizes bases of the 16S rRNA that are involved in tRNA selection in the A site and with the mRNA backbone. Located at the interface of the 30S and 50S subunits, it traverses the body of the 30S subunit contacting proteins on the other side and probably holding the rRNA structure together. The combined cluster of proteins S8, S12 and S17 appears to hold together the shoulder and platform of the 30S subunit. The protein is Small ribosomal subunit protein uS12 of Mycoplasma genitalium (strain ATCC 33530 / DSM 19775 / NCTC 10195 / G37) (Mycoplasmoides genitalium).